The chain runs to 491 residues: Probable cytosol aminopeptidase (491 aa).

Residues K260 and D265 each contribute to the Mn(2+) site. The active site involves K272. D284, D343, and E345 together coordinate Mn(2+). Residue R347 is part of the active site.

Belongs to the peptidase M17 family. The cofactor is Mn(2+).

Its subcellular location is the cytoplasm. It carries out the reaction Release of an N-terminal amino acid, Xaa-|-Yaa-, in which Xaa is preferably Leu, but may be other amino acids including Pro although not Arg or Lys, and Yaa may be Pro. Amino acid amides and methyl esters are also readily hydrolyzed, but rates on arylamides are exceedingly low.. The catalysed reaction is Release of an N-terminal amino acid, preferentially leucine, but not glutamic or aspartic acids.. In terms of biological role, presumably involved in the processing and regular turnover of intracellular proteins. Catalyzes the removal of unsubstituted N-terminal amino acids from various peptides. This chain is Probable cytosol aminopeptidase, found in Trichormus variabilis (strain ATCC 29413 / PCC 7937) (Anabaena variabilis).